A 425-amino-acid polypeptide reads, in one-letter code: 2-methylserine hydroxymethyltransferase (425 aa).

(6S)-5,6,7,8-tetrahydrofolate contacts are provided by residues Leu-126 and 130 to 132 (GHL). The residue at position 235 (Lys-235) is an N6-(pyridoxal phosphate)lysine. Residue Glu-251 coordinates (6S)-5,6,7,8-tetrahydrofolate.

This sequence belongs to the SHMT family. As to quaternary structure, homodimer. Pyridoxal 5'-phosphate is required as a cofactor.

The protein localises to the cytoplasm. The catalysed reaction is (6R)-5,10-methylene-5,6,7,8-tetrahydrofolate + D-alanine + H2O = 2-methylserine + (6S)-5,6,7,8-tetrahydrofolate. It functions in the pathway one-carbon metabolism; tetrahydrofolate interconversion. In terms of biological role, catalyzes the reversible interconversion of alpha-methyl-L-serine to D-alanine with tetrahydrofolate (THF) serving as the one-carbon carrier. Cannot use alpha-methyl-D-serine, L-serine, D-serine or L-alanine. In Ensifer sp, this protein is 2-methylserine hydroxymethyltransferase.